We begin with the raw amino-acid sequence, 128 residues long: Sulfurtransferase TusD (128 aa).

Catalysis depends on cysteine 78, which acts as the Cysteine persulfide intermediate.

This sequence belongs to the DsrE/TusD family. As to quaternary structure, heterohexamer, formed by a dimer of trimers. The hexameric TusBCD complex contains 2 copies each of TusB, TusC and TusD. The TusBCD complex interacts with TusE.

It localises to the cytoplasm. Part of a sulfur-relay system required for 2-thiolation of 5-methylaminomethyl-2-thiouridine (mnm(5)s(2)U) at tRNA wobble positions. Accepts sulfur from TusA and transfers it in turn to TusE. The polypeptide is Sulfurtransferase TusD (Salmonella newport (strain SL254)).